The primary structure comprises 223 residues: Small ribosomal subunit protein uS3 (223 aa).

A KH type-2 domain is found at 39–117 (IREFLRKKPS…RPELNAKLVA (79 aa)).

Belongs to the universal ribosomal protein uS3 family. In terms of assembly, part of the 30S ribosomal subunit. Forms a tight complex with proteins S10 and S14.

Its function is as follows. Binds the lower part of the 30S subunit head. Binds mRNA in the 70S ribosome, positioning it for translation. This is Small ribosomal subunit protein uS3 from Chlamydia abortus (strain DSM 27085 / S26/3) (Chlamydophila abortus).